The sequence spans 551 residues: Prunin 1 Pru du 6 (551 aa).

The first 20 residues, 1–20 (MAKAFVFSLCLLLVFNGCLA), serve as a signal peptide directing secretion. 2 cysteine pairs are disulfide-bonded: C32–C65 and C108–C374. Residues 37 to 312 (LQAREPDNRI…ALNVNEETAR (276 aa)) enclose the Cupin type-1 1 domain. Disordered stretches follow at residues 111–194 (TFEE…QKTR), 238–293 (NPRK…NVFS), and 329–360 (GNLDFVQPPRGRQEREHEERQQEQLQQERQQQ). Low complexity-rich tracts occupy residues 114–124 (ESQQSSQQGRQ), 132–148 (QQQQQGEQGRQQGQQEQ), and 168–185 (QEQQQGQQGRPQQQQQFR). R194 lines the Ca(2+) pocket. The span at 254–275 (QQGQSQPRQQGEQGRPGQHQQP) shows a compositional bias: low complexity. The span at 282–293 (QEQQGNGNNVFS) shows a compositional bias: polar residues. Positions 339-350 (GRQEREHEERQQ) are enriched in basic and acidic residues. Positions 351-360 (EQLQQERQQQ) are enriched in low complexity. The NGXEET; peptidase recognition motif signature appears at 367-372 (NGLEET). Residues 380 to 529 (ENIGNPERAD…AYQISREQAR (150 aa)) form the Cupin type-1 2 domain.

The protein belongs to the 11S seed storage protein (globulins) family. As to quaternary structure, hexamer of two trimers; each subunit is composed of an acidic and a basic chain derived from a single precursor and linked by a disulfide bond. In terms of processing, proteolytically processed from a single precursor to produce an acidic and a basic chain that are linked by a disulfide bond. As to expression, expressed in seed (at protein level). Expressed in seed.

Seed storage protein. This chain is Prunin 1 Pru du 6, found in Prunus dulcis (Almond).